The chain runs to 272 residues: Phosphate import ATP-binding protein PstB 2 (272 aa).

The region spanning 26–267 (IEINNLCLNY…PIHKQTEDYI (242 aa)) is the ABC transporter domain. 58-65 (GPSGCGKS) contacts ATP.

This sequence belongs to the ABC transporter superfamily. Phosphate importer (TC 3.A.1.7) family. In terms of assembly, the complex is composed of two ATP-binding proteins (PstB), two transmembrane proteins (PstC and PstA) and a solute-binding protein (PstS).

It localises to the cell inner membrane. It catalyses the reaction phosphate(out) + ATP + H2O = ADP + 2 phosphate(in) + H(+). Its function is as follows. Part of the ABC transporter complex PstSACB involved in phosphate import. Responsible for energy coupling to the transport system. In Aliivibrio fischeri (strain ATCC 700601 / ES114) (Vibrio fischeri), this protein is Phosphate import ATP-binding protein PstB 2.